Reading from the N-terminus, the 174-residue chain is Nucleoside diphosphate kinase (174 aa).

The ATP site is built by K14, F62, R90, T96, and R107. H123 (pros-phosphohistidine intermediate) is an active-site residue.

This sequence belongs to the NDK family. The cofactor is Mg(2+).

The protein resides in the cytoplasm. It carries out the reaction a 2'-deoxyribonucleoside 5'-diphosphate + ATP = a 2'-deoxyribonucleoside 5'-triphosphate + ADP. It catalyses the reaction a ribonucleoside 5'-diphosphate + ATP = a ribonucleoside 5'-triphosphate + ADP. Functionally, major role in the synthesis of nucleoside triphosphates other than ATP. The ATP gamma phosphate is transferred to the NDP beta phosphate via a ping-pong mechanism, using a phosphorylated active-site intermediate. In Thermococcus kodakarensis (strain ATCC BAA-918 / JCM 12380 / KOD1) (Pyrococcus kodakaraensis (strain KOD1)), this protein is Nucleoside diphosphate kinase.